Reading from the N-terminus, the 576-residue chain is MWAPRCRRFWSRWEQVAALLLLLLLLGVPPRSLALPPIRYSHAGICPNDMNPNLWVDAQSTCRRECETDQECETYEKCCPNVCGTKSCVAARYMDVKGKKGPVGMPKEATCDHFMCLQQGSECDIWDGQPVCKCKDRCEKEPSFTCASDGLTYYNRCYMDAEACSKGITLAVVTCRYHFTWPNTSPPPPETTMHPTTASPETPELDMAAPALLNNPVHQSVTMGETVSFLCDVVGRPRPEITWEKQLEDRENVVMRPNHVRGNVVVTNIAQLVIYNAQLQDAGIYTCTARNVAGVLRADFPLSVVRGHQAAATSESSPNGTAFPAAECLKPPDSEDCGEEQTRWHFDAQANNCLTFTFGHCHRNLNHFETYEACMLACMSGPLAACSLPALQGPCKAYAPRWAYNSQTGQCQSFVYGGCEGNGNNFESREACEESCPFPRGNQRCRACKPRQKLVTSFCRSDFVILGRVSELTEEPDSGRALVTVDEVLKDEKMGLKFLGQEPLEVTLLHVDWACPCPNVTVSEMPLIIMGEVDGGMAMLRPDSFVGASSARRVRKLREVMHKKTCDVLKEFLGLH.

The first 34 residues, 1-34 (MWAPRCRRFWSRWEQVAALLLLLLLLGVPPRSLA), serve as a signal peptide directing secretion. Residues 39–92 (RYSHAGICPNDMNPNLWVDAQSTCRRECETDQECETYEKCCPNVCGTKSCVAAR) enclose the WAP domain. 8 cysteine pairs are disulfide-bonded: Cys46/Cys79, Cys62/Cys83, Cys66/Cys78, Cys72/Cys88, Cys134/Cys164, Cys138/Cys157, Cys146/Cys175, and Cys231/Cys287. The 52-residue stretch at 126-177 (WDGQPVCKCKDRCEKEPSFTCASDGLTYYNRCYMDAEACSKGITLAVVTCRY) folds into the Kazal-like domain. The region spanning 210–303 (PALLNNPVHQ…GVLRADFPLS (94 aa)) is the Ig-like C2-type domain. N-linked (GlcNAc...) asparagine glycosylation occurs at Asn319. Intrachain disulfides connect Cys328/Cys378, Cys337/Cys361, Cys353/Cys374, Cys386/Cys436, Cys395/Cys419, Cys411/Cys432, Cys445/Cys515, Cys448/Cys517, and Cys459/Cys566. BPTI/Kunitz inhibitor domains follow at residues 328–378 (CLKP…MLAC) and 386–436 (CSLP…EESC). The NTR domain occupies 445–566 (CRACKPRQKL…LREVMHKKTC (122 aa)). Asn519 carries N-linked (GlcNAc...) asparagine glycosylation.

The protein belongs to the WFIKKN family. As to quaternary structure, interacts with both mature and propeptide myostatin/MSTN. Primarily expressed in ovary, testis and brain, but not in liver. In fetal tissues, it is primarily expressed in brain, skeletal muscle, thymus and kidney.

The protein resides in the secreted. Its function is as follows. Protease-inhibitor that contains multiple distinct protease inhibitor domains. Probably has serine protease- and metalloprotease-inhibitor activity. Inhibits the biological activity of mature myostatin, but not activin. The polypeptide is WAP, Kazal, immunoglobulin, Kunitz and NTR domain-containing protein 2 (WFIKKN2) (Homo sapiens (Human)).